A 228-amino-acid chain; its full sequence is Phosphoribosylformylglycinamidine synthase subunit PurQ (228 aa).

In terms of domain architecture, Glutamine amidotransferase type-1 spans 3-226; it reads FAVIVFPGSN…VKYWRETHVV (224 aa). The active-site Nucleophile is cysteine 86. Active-site residues include histidine 195 and glutamate 197.

In terms of assembly, part of the FGAM synthase complex composed of 1 PurL, 1 PurQ and 2 PurS subunits.

It localises to the cytoplasm. The catalysed reaction is N(2)-formyl-N(1)-(5-phospho-beta-D-ribosyl)glycinamide + L-glutamine + ATP + H2O = 2-formamido-N(1)-(5-O-phospho-beta-D-ribosyl)acetamidine + L-glutamate + ADP + phosphate + H(+). The enzyme catalyses L-glutamine + H2O = L-glutamate + NH4(+). It participates in purine metabolism; IMP biosynthesis via de novo pathway; 5-amino-1-(5-phospho-D-ribosyl)imidazole from N(2)-formyl-N(1)-(5-phospho-D-ribosyl)glycinamide: step 1/2. In terms of biological role, part of the phosphoribosylformylglycinamidine synthase complex involved in the purines biosynthetic pathway. Catalyzes the ATP-dependent conversion of formylglycinamide ribonucleotide (FGAR) and glutamine to yield formylglycinamidine ribonucleotide (FGAM) and glutamate. The FGAM synthase complex is composed of three subunits. PurQ produces an ammonia molecule by converting glutamine to glutamate. PurL transfers the ammonia molecule to FGAR to form FGAM in an ATP-dependent manner. PurS interacts with PurQ and PurL and is thought to assist in the transfer of the ammonia molecule from PurQ to PurL. The sequence is that of Phosphoribosylformylglycinamidine synthase subunit PurQ from Geobacillus sp. (strain WCH70).